The sequence spans 225 residues: Uridylate kinase (225 aa).

9-10 (GS) is an ATP binding site. Glycine 44 provides a ligand contact to UMP. Glycine 45 and arginine 49 together coordinate ATP. UMP is bound by residues aspartate 66 and 114–120 (THPGHTT). ATP-binding residues include threonine 140, asparagine 141, tyrosine 146, and aspartate 149.

Belongs to the UMP kinase family. In terms of assembly, homohexamer.

It localises to the cytoplasm. The enzyme catalyses UMP + ATP = UDP + ADP. Its pathway is pyrimidine metabolism; CTP biosynthesis via de novo pathway; UDP from UMP (UMPK route): step 1/1. Inhibited by UTP. In terms of biological role, catalyzes the reversible phosphorylation of UMP to UDP. This Thermococcus onnurineus (strain NA1) protein is Uridylate kinase.